The following is a 204-amino-acid chain: Arginine exporter protein ArgO (204 aa).

The next 6 membrane-spanning stretches (helical) occupy residues Met-1 to Pro-21, Leu-37 to Gly-57, Leu-67 to Ala-87, Ile-111 to Val-131, Trp-147 to Ala-167, and Val-179 to Ala-199.

Belongs to the LysE/ArgO transporter (TC 2.A.75) family.

The protein resides in the cell inner membrane. The catalysed reaction is L-arginine(in) = L-arginine(out). In terms of biological role, involved in the export of arginine. Important to control the intracellular level of arginine and the correct balance between arginine and lysine. This is Arginine exporter protein ArgO from Pectobacterium carotovorum subsp. carotovorum (strain PC1).